A 144-amino-acid chain; its full sequence is Small ribosomal subunit protein eS19 (144 aa).

The protein belongs to the eukaryotic ribosomal protein eS19 family.

The sequence is that of Small ribosomal subunit protein eS19 (RPS19) from Argopecten irradians (Bay scallop).